The primary structure comprises 249 residues: Tryptophan synthase alpha chain (249 aa).

Active-site proton acceptor residues include glutamate 43 and aspartate 54.

This sequence belongs to the TrpA family. As to quaternary structure, tetramer of two alpha and two beta chains.

It catalyses the reaction (1S,2R)-1-C-(indol-3-yl)glycerol 3-phosphate + L-serine = D-glyceraldehyde 3-phosphate + L-tryptophan + H2O. It participates in amino-acid biosynthesis; L-tryptophan biosynthesis; L-tryptophan from chorismate: step 5/5. In terms of biological role, the alpha subunit is responsible for the aldol cleavage of indoleglycerol phosphate to indole and glyceraldehyde 3-phosphate. The protein is Tryptophan synthase alpha chain of Campylobacter jejuni subsp. jejuni serotype O:23/36 (strain 81-176).